We begin with the raw amino-acid sequence, 240 residues long: Adapter protein MecA (240 aa).

Belongs to the MecA family. As to quaternary structure, homodimer.

Enables the recognition and targeting of unfolded and aggregated proteins to the ClpC protease or to other proteins involved in proteolysis. The polypeptide is Adapter protein MecA (Streptococcus mutans serotype c (strain ATCC 700610 / UA159)).